Reading from the N-terminus, the 254-residue chain is MNPLAKRIIPCLDIKEGRVVKGVNFLGLRDAGDPVEVARRYNEEGADEIAFLDITATHERRDTMCDIVRAVAKEVFIPLTVGGGIRKLEDMYTLLNAGCDKVSINSSAIKNPSLIDEGAKRFGSQCIVVAIDAKSRADKSGWNVYINGGRIDTGIDLLEWTKEVYERGAGEILLTSMDADGTKAGYDCEQLQTLSKLVDIPLIASGGAGTMEHIKEAFLSGADAALAATIFHYKEIDIMDLKRYLRSEGIEVRL.

Active-site residues include D13 and D132.

It belongs to the HisA/HisF family. Heterodimer of HisH and HisF.

The protein resides in the cytoplasm. The enzyme catalyses 5-[(5-phospho-1-deoxy-D-ribulos-1-ylimino)methylamino]-1-(5-phospho-beta-D-ribosyl)imidazole-4-carboxamide + L-glutamine = D-erythro-1-(imidazol-4-yl)glycerol 3-phosphate + 5-amino-1-(5-phospho-beta-D-ribosyl)imidazole-4-carboxamide + L-glutamate + H(+). It functions in the pathway amino-acid biosynthesis; L-histidine biosynthesis; L-histidine from 5-phospho-alpha-D-ribose 1-diphosphate: step 5/9. Functionally, IGPS catalyzes the conversion of PRFAR and glutamine to IGP, AICAR and glutamate. The HisF subunit catalyzes the cyclization activity that produces IGP and AICAR from PRFAR using the ammonia provided by the HisH subunit. This Wolinella succinogenes (strain ATCC 29543 / DSM 1740 / CCUG 13145 / JCM 31913 / LMG 7466 / NCTC 11488 / FDC 602W) (Vibrio succinogenes) protein is Imidazole glycerol phosphate synthase subunit HisF.